A 222-amino-acid polypeptide reads, in one-letter code: UPF0758 protein CT0611 (222 aa).

Residues 100-222 enclose the MPN domain; that stretch reads KVKGARDVFE…WFSFRDHALL (123 aa). Zn(2+)-binding residues include His-171, His-173, and Asp-184. Residues 171–184 carry the JAMM motif motif; sequence HNHPSGDVQPSNAD.

Belongs to the UPF0758 family.

In Chlorobaculum tepidum (strain ATCC 49652 / DSM 12025 / NBRC 103806 / TLS) (Chlorobium tepidum), this protein is UPF0758 protein CT0611.